A 492-amino-acid polypeptide reads, in one-letter code: N-succinylglutamate 5-semialdehyde dehydrogenase (492 aa).

Position 220 to 225 (220 to 225) interacts with NAD(+); sequence GSASTG. Active-site residues include Glu-243 and Cys-277.

The protein belongs to the aldehyde dehydrogenase family. AstD subfamily.

The enzyme catalyses N-succinyl-L-glutamate 5-semialdehyde + NAD(+) + H2O = N-succinyl-L-glutamate + NADH + 2 H(+). Its pathway is amino-acid degradation; L-arginine degradation via AST pathway; L-glutamate and succinate from L-arginine: step 4/5. Its function is as follows. Catalyzes the NAD-dependent reduction of succinylglutamate semialdehyde into succinylglutamate. The sequence is that of N-succinylglutamate 5-semialdehyde dehydrogenase from Salmonella agona (strain SL483).